The chain runs to 126 residues: Basic phospholipase A2 1 (126 aa).

The propeptide occupies 1 to 7 (SNRPMPL). 7 disulfides stabilise this stretch: C18–C78, C33–C125, C35–C51, C50–C106, C57–C99, C67–C92, and C85–C97. Residues Y34, G36, and G38 each contribute to the Ca(2+) site. The active site involves H54. D55 is a binding site for Ca(2+). D100 is a catalytic residue.

The protein belongs to the phospholipase A2 family. Group I subfamily. D49 sub-subfamily. In terms of assembly, heterodimer formed between two homologous isoforms: isoform 1 and isoform 2. It depends on Ca(2+) as a cofactor. In terms of tissue distribution, expressed by the venom gland.

The protein resides in the secreted. It carries out the reaction a 1,2-diacyl-sn-glycero-3-phosphocholine + H2O = a 1-acyl-sn-glycero-3-phosphocholine + a fatty acid + H(+). In terms of biological role, PLA2 catalyzes the calcium-dependent hydrolysis of the 2-acyl groups in 3-sn-phosphoglycerides. This is Basic phospholipase A2 1 from Naja sagittifera (Andaman cobra).